A 135-amino-acid chain; its full sequence is DNA-binding protein H-NS homolog (135 aa).

The DNA-binding element occupies 112–117 (QGRTPS).

Belongs to the histone-like protein H-NS family. In terms of assembly, homodimer that oligomerizes on DNA into higher-order complexes that form bridges between disparate regions of DNA compacting it.

Its subcellular location is the cytoplasm. The protein localises to the nucleoid. Functionally, a DNA-binding protein implicated in transcriptional repression and chromosome organization and compaction. Binds nucleation sites in AT-rich DNA and bridges them, forming higher-order nucleoprotein complexes and condensing the chromosome. A subset of genes are repressed by H-NS in association with other proteins. This is DNA-binding protein H-NS homolog (hns) from Buchnera aphidicola subsp. Acyrthosiphon pisum (strain APS) (Acyrthosiphon pisum symbiotic bacterium).